The following is a 330-amino-acid chain: Ribosomal RNA small subunit methyltransferase H (330 aa).

S-adenosyl-L-methionine contacts are provided by residues 35–37 (GGY), Asp-53, Phe-80, Asp-101, and Gln-108.

This sequence belongs to the methyltransferase superfamily. RsmH family.

The protein resides in the cytoplasm. It carries out the reaction cytidine(1402) in 16S rRNA + S-adenosyl-L-methionine = N(4)-methylcytidine(1402) in 16S rRNA + S-adenosyl-L-homocysteine + H(+). Functionally, specifically methylates the N4 position of cytidine in position 1402 (C1402) of 16S rRNA. This chain is Ribosomal RNA small subunit methyltransferase H, found in Rhodopseudomonas palustris (strain BisB18).